The chain runs to 537 residues: 5,6-dihydroxyindole-2-carboxylic acid oxidase (537 aa).

Positions 1-24 (MSAPKLLSLGCIFFPLLLFQQARA) are cleaved as a signal peptide. At 25 to 477 (QFPRQCATVE…WPSREFSVPE (453 aa)) the chain is on the lumenal, melanosome side. Intrachain disulfides connect C30–C41, C42–C65, C56–C99, C101–C110, and C113–C122. N-linked (GlcNAc...) asparagine glycans are attached at residues N96 and N104. Residue N181 is glycosylated (N-linked (GlcNAc...) asparagine). Positions 192, 215, and 224 each coordinate Zn(2+). 2 cysteine pairs are disulfide-bonded: C258-C261 and C290-C303. 2 N-linked (GlcNAc...) asparagine glycosylation sites follow: N304 and N350. Zn(2+)-binding residues include H377 and H381. A glycan (N-linked (GlcNAc...) asparagine) is linked at N385. H404 provides a ligand contact to Zn(2+). A helical membrane pass occupies residues 478-501 (IIAIAVVGALLLVALIFGTASYLI). Residues 502–537 (RARRSMDEANQPLLTDQYQCYAEEYEKLQNPNQSVV) lie on the Cytoplasmic side of the membrane.

The protein belongs to the tyrosinase family. In terms of assembly, monomer. Interacts with ATP7A. Interacts with SLC45A2. Cu(2+) serves as cofactor. Zn(2+) is required as a cofactor. Post-translationally, glycosylated. In terms of tissue distribution, pigment cells.

It localises to the melanosome membrane. It catalyses the reaction 2 5,6-dihydroxyindole-2-carboxylate + O2 = 2 indole-5,6-quinone-2-carboxylate + 2 H2O. It participates in pigment biosynthesis; melanin biosynthesis. Its activity is regulated as follows. The activity depends critically on the nature of the bound metal ion. Catalyzes the oxidation of 5,6-dihydroxyindole-2-carboxylic acid (DHICA) in the presence of bound Cu(2+) ions, but lacks activity in the presence of bound Zn(2+) ions. In terms of biological role, plays a role in melanin biosynthesis. Catalyzes the oxidation of 5,6-dihydroxyindole-2-carboxylic acid (DHICA) into indole-5,6-quinone-2-carboxylic acid in the presence of bound Cu(2+) ions, but not in the presence of Zn(2+). May regulate or influence the type of melanin synthesized. Also to a lower extent, capable of hydroxylating tyrosine and producing melanin. This is 5,6-dihydroxyindole-2-carboxylic acid oxidase from Homo sapiens (Human).